We begin with the raw amino-acid sequence, 398 residues long: Cytochrome P450 165B3 (398 aa).

Cysteine 347 contacts heme.

It belongs to the cytochrome P450 family. It depends on heme as a cofactor.

The protein operates within antibiotic biosynthesis; vancomycin biosynthesis. In terms of biological role, involved in the coupling of aromatic side chains of the heptapeptide of vancomycin. This is Cytochrome P450 165B3 (cyp165B3) from Amycolatopsis orientalis (Nocardia orientalis).